A 61-amino-acid chain; its full sequence is Small ribosomal subunit protein uS14 (61 aa).

4 residues coordinate Zn(2+): Cys24, Cys27, Cys40, and Cys43.

It belongs to the universal ribosomal protein uS14 family. Zinc-binding uS14 subfamily. In terms of assembly, part of the 30S ribosomal subunit. Contacts proteins S3 and S10. Requires Zn(2+) as cofactor.

Functionally, binds 16S rRNA, required for the assembly of 30S particles and may also be responsible for determining the conformation of the 16S rRNA at the A site. The protein is Small ribosomal subunit protein uS14 of Streptococcus thermophilus (strain ATCC BAA-491 / LMD-9).